Here is a 187-residue protein sequence, read N- to C-terminus: Acireductone dioxygenase (187 aa).

Residues histidine 90, histidine 92, glutamate 96, and histidine 135 each coordinate Fe(2+). 4 residues coordinate Ni(2+): histidine 90, histidine 92, glutamate 96, and histidine 135.

The protein belongs to the acireductone dioxygenase (ARD) family. It depends on Fe(2+) as a cofactor. Requires Ni(2+) as cofactor.

It localises to the cytoplasm. Its subcellular location is the nucleus. It catalyses the reaction 1,2-dihydroxy-5-(methylsulfanyl)pent-1-en-3-one + O2 = 4-methylsulfanyl-2-oxobutanoate + formate + 2 H(+). The catalysed reaction is 1,2-dihydroxy-5-(methylsulfanyl)pent-1-en-3-one + O2 = 3-(methylsulfanyl)propanoate + CO + formate + 2 H(+). The protein operates within amino-acid biosynthesis; L-methionine biosynthesis via salvage pathway; L-methionine from S-methyl-5-thio-alpha-D-ribose 1-phosphate: step 5/6. Its function is as follows. Catalyzes 2 different reactions between oxygen and the acireductone 1,2-dihydroxy-3-keto-5-methylthiopentene (DHK-MTPene) depending upon the metal bound in the active site. Fe-containing acireductone dioxygenase (Fe-ARD) produces formate and 2-keto-4-methylthiobutyrate (KMTB), the alpha-ketoacid precursor of methionine in the methionine recycle pathway. Ni-containing acireductone dioxygenase (Ni-ARD) produces methylthiopropionate, carbon monoxide and formate, and does not lie on the methionine recycle pathway. This Drosophila pseudoobscura pseudoobscura (Fruit fly) protein is Acireductone dioxygenase.